A 332-amino-acid polypeptide reads, in one-letter code: Glycerol-3-phosphate dehydrogenase [NAD(P)+] (332 aa).

The NADPH site is built by Trp13, Lys34, and Lys108. The sn-glycerol 3-phosphate site is built by Lys108, Gly136, and Ser138. Ala140 is an NADPH binding site. The sn-glycerol 3-phosphate site is built by Lys191, Asp244, Ser254, Arg255, and Asn256. Lys191 (proton acceptor) is an active-site residue. Arg255 serves as a coordination point for NADPH. Residues Val279 and Glu281 each coordinate NADPH.

This sequence belongs to the NAD-dependent glycerol-3-phosphate dehydrogenase family.

The protein resides in the cytoplasm. The catalysed reaction is sn-glycerol 3-phosphate + NAD(+) = dihydroxyacetone phosphate + NADH + H(+). It catalyses the reaction sn-glycerol 3-phosphate + NADP(+) = dihydroxyacetone phosphate + NADPH + H(+). The protein operates within membrane lipid metabolism; glycerophospholipid metabolism. In terms of biological role, catalyzes the reduction of the glycolytic intermediate dihydroxyacetone phosphate (DHAP) to sn-glycerol 3-phosphate (G3P), the key precursor for phospholipid synthesis. This is Glycerol-3-phosphate dehydrogenase [NAD(P)+] from Francisella tularensis subsp. holarctica (strain FTNF002-00 / FTA).